Consider the following 324-residue polypeptide: Olfactory receptor 2T2 (324 aa).

Topologically, residues 1-26 (MGMEGLLQNSTNFVLTGLITHPAFPG) are extracellular. N9 is a glycosylation site (N-linked (GlcNAc...) asparagine). Residues 27-50 (LLFAIVFSIFVVAITANLVMILLI) form a helical membrane-spanning segment. Topologically, residues 51–58 (HMDSRLHT) are cytoplasmic. A helical membrane pass occupies residues 59 to 80 (PMYFLLSQLSIMDTIYICITVP). Residues 81–101 (KMLQDLLSKDKTISFLGCAVQ) are Extracellular-facing. An intrachain disulfide couples C98 to C190. Residues 102 to 121 (IFLYLTLIGGEFFLLGLMAY) form a helical membrane-spanning segment. Residues 122–140 (DRYVAVCNPLRYPLLMNRR) are Cytoplasmic-facing. The helical transmembrane segment at 141–159 (VCLFMVVGSWVGGSLDGFM) threads the bilayer. At 160–196 (LTPVTMSFPFCRSREINHFFCEIPAVLKLSCTDTSLY) the chain is on the extracellular side. A helical membrane pass occupies residues 197–220 (ETLMYACCVLMLLIPLSVISVSYT). Topologically, residues 221 to 237 (HILLTVHRMNSAEGRRK) are cytoplasmic. A helical membrane pass occupies residues 238–260 (AFATCSSHIMVVSVFYGAAFYTN). Topologically, residues 261–273 (VLPHSYHTPEKDK) are extracellular. The helical transmembrane segment at 274–293 (VVSAFYTILTPMLNPLIYSL) threads the bilayer. At 294-324 (RNKDVAAALRKVLGRCGSSQSIRVATVIRKG) the chain is on the cytoplasmic side.

This sequence belongs to the G-protein coupled receptor 1 family.

It localises to the cell membrane. Odorant receptor. In Homo sapiens (Human), this protein is Olfactory receptor 2T2 (OR2T2).